We begin with the raw amino-acid sequence, 375 residues long: Serpin B5 (375 aa).

N-linked (GlcNAc...) asparagine glycosylation is found at Asn-133, Asn-298, and Asn-361.

This sequence belongs to the serpin family. Ov-serpin subfamily. Interacts with IRF6.

The protein localises to the secreted. The protein resides in the extracellular space. In terms of biological role, tumor suppressor. It blocks the growth, invasion, and metastatic properties of mammary tumors. As it does not undergo the S (stressed) to R (relaxed) conformational transition characteristic of active serpins, it exhibits no serine protease inhibitory activity. The protein is Serpin B5 (Serpinb5) of Mus musculus (Mouse).